The primary structure comprises 236 residues: Sugar fermentation stimulation protein homolog (236 aa).

Belongs to the SfsA family.

This chain is Sugar fermentation stimulation protein homolog, found in Gloeobacter violaceus (strain ATCC 29082 / PCC 7421).